The chain runs to 961 residues: Copper-exporting P-type ATPase (961 aa).

HMA domains lie at 3 to 64 and 69 to 130; these read QTTL…YQAT and PDVE…YHAT. Cu(+)-binding residues include C14, C17, C80, and C83. 2 disordered regions span residues 131 to 153 and 178 to 201; these read QQGI…PESL and VLPT…TASA. Positions 142–151 are enriched in polar residues; that stretch reads LTHSAQSQPE. Residues 226-289 form the HMA 3 domain; it reads ESVQLLLTGM…AVKNAGYGAE (64 aa). Cu(+) contacts are provided by C237 and C240. Transmembrane regions (helical) follow at residues 316 to 336, 345 to 365, 381 to 401, 565 to 585, and 592 to 612; these read AALG…GGSM, PWLI…GHFY, TLVA…NIWP, AVFV…WYFF, and VYTL…ALGL. D650 (4-aspartylphosphate intermediate) is an active-site residue. Positions 847 and 851 each coordinate Mg(2+). 3 consecutive transmembrane segments (helical) span residues 860-880, 906-926, and 928-948; these read VGIA…ITLM, LGAF…LYPF, and GTLL…ITVV.

The protein belongs to the cation transport ATPase (P-type) (TC 3.A.3) family. Type IB subfamily.

Its subcellular location is the cell membrane. The enzyme catalyses Cu(+)(in) + ATP + H2O = Cu(+)(out) + ADP + phosphate + H(+). Functionally, involved in copper export. The polypeptide is Copper-exporting P-type ATPase (copA) (Yersinia pestis).